The chain runs to 80 residues: Teretoxin Tsu6.5 (80 aa).

The N-terminal stretch at 1–21 (MAINGRLLCLCLVLGLVFESL) is a signal peptide. Residues 22–42 (GHPSVQEKRAAEDSKPSGERR) constitute a propeptide that is removed on maturation.

Belongs to the teretoxin M (TM) superfamily. Post-translationally, contains 3 disulfide bonds. Expressed by the venom duct.

The protein localises to the secreted. The polypeptide is Teretoxin Tsu6.5 (Terebra subulata (Chocolate spotted auger)).